Here is a 299-residue protein sequence, read N- to C-terminus: dTDP-4-dehydrorhamnose reductase (299 aa).

NADH contacts are provided by residues 10 to 12 (GQV), D30, 39 to 40 (DF), and 63 to 65 (AHT). Residue 11–12 (QV) coordinates NADPH. NADPH-binding positions include 39 to 40 (DF), 63 to 65 (AHT), and Y102. 104 to 105 (TD) contributes to the dTDP-beta-L-rhamnose binding site. Residues Y128 and K132 each contribute to the NADH site. NADPH-binding residues include Y128 and K132. The active-site Proton donor/acceptor is the Y128. W153 is a binding site for dTDP-beta-L-rhamnose.

This sequence belongs to the dTDP-4-dehydrorhamnose reductase family. Homodimer. It depends on Mg(2+) as a cofactor.

It carries out the reaction dTDP-beta-L-rhamnose + NADP(+) = dTDP-4-dehydro-beta-L-rhamnose + NADPH + H(+). Its pathway is carbohydrate biosynthesis; dTDP-L-rhamnose biosynthesis. It functions in the pathway bacterial outer membrane biogenesis; LPS O-antigen biosynthesis. Its function is as follows. Involved in the biosynthesis of the dTDP-L-rhamnose which is an important component of lipopolysaccharide (LPS). Catalyzes the reduction of dTDP-6-deoxy-L-lyxo-4-hexulose to yield dTDP-L-rhamnose. RmlD uses NADH and NADPH nearly equally well. In Shigella flexneri, this protein is dTDP-4-dehydrorhamnose reductase.